The primary structure comprises 223 residues: MNKFFSINIILWALIGLNFHILSYSLKISISNFPWQWPQEGLETYMIHTDYYLGSILFISFLGGRFASLISQLAYQIIQINIVQLIIFFSKNLHISFLLPNILNQLINLDTNRGTITEYTCIQDHIINNGWLSYFVVNLISYDLFENTLNQYNTQAIDSFFNKSVIFLIRLYIMNILFSLLTSNSLNEWIMYSIKDNFLLLPNQLIIICSVVLLVFLLQFCVY.

Its subcellular location is the plastid. The protein resides in the chloroplast. This is an uncharacterized protein from Mesostigma viride (Green alga).